We begin with the raw amino-acid sequence, 402 residues long: MAVKTLKDLLAEGVEGRHVLVRSDLNVPLADGEITDPGRIDASIPTLRALLDEGARVIVAAHLGRPKGEVDPELSLAPVAEALAERLDQWVPLAGDVTGEDAHERANGLDDGDILLLENVRFDPRETSKDASERAEFAAELAELTADNGAFVSDGFGVVHREQASVYDVAKKLPSYAGGLVSAELEVLEKVSGAPEAPYAVVLGGSKVSDKLGVIEALAPKVDRLIIGGGMCFTFLAAQGHDVGGSLLQEDMIDTCKDLLERYGDVIVLPTDVVAAENFSKDAEHKAVGLSEIPSGWMGLDIGPESADAFAAVLGEAKTVFWNGPMGVFEFPAFAAGTKAVAEAIIKATDAGAFSVVGGGDSAAAVRTLGLDEKGFSHISTGGGASLEFLEGKTLPGVEVLG.

Substrate contacts are provided by residues 24–26 (DLN), R39, 62–65 (HLGR), R121, and R161. Residues K211, G299, E330, and 359-362 (GGDS) each bind ATP.

The protein belongs to the phosphoglycerate kinase family. As to quaternary structure, monomer.

It localises to the cytoplasm. It carries out the reaction (2R)-3-phosphoglycerate + ATP = (2R)-3-phospho-glyceroyl phosphate + ADP. It functions in the pathway carbohydrate degradation; glycolysis; pyruvate from D-glyceraldehyde 3-phosphate: step 2/5. This is Phosphoglycerate kinase from Corynebacterium urealyticum (strain ATCC 43042 / DSM 7109).